A 53-amino-acid polypeptide reads, in one-letter code: DVEPLLGFLSPKSGQENEVDDFPYKGQGELXXGIVEQCCHKPCNIFDLQNYCN.

Residues 1-30 (DVEPLLGFLSPKSGQENEVDDFPYKGQGEL) constitute a propeptide, c peptide. Residues cysteine 38 and cysteine 43 are joined by a disulfide bond.

This sequence belongs to the insulin family. In terms of assembly, heterodimer of a B chain and an A chain linked by two disulfide bonds.

It localises to the secreted. In terms of biological role, insulin decreases blood glucose concentration. It increases cell permeability to monosaccharides, amino acids and fatty acids. It accelerates glycolysis, the pentose phosphate cycle, and glycogen synthesis in liver. The chain is Insulin (ins) from Anguilla anguilla (European freshwater eel).